Here is a 218-residue protein sequence, read N- to C-terminus: C-type lectin domain family 2 member H (218 aa).

Topologically, residues 1–52 (MNAAKVETSSMGMLQRADLTAADCLQEGEMGKKIQGKCFRIISTVSPVKLYC) are cytoplasmic. Residues 53 to 73 (CYGVIMVLTVAVIALSVALSV) traverse the membrane as a helical; Signal-anchor for type II membrane protein segment. The Extracellular segment spans residues 74 to 218 (RNKIPAMEDR…SRVGSVPRHV (145 aa)). A disulfide bond links cysteine 90 and cysteine 101. The C-type lectin domain maps to 97-201 (FGSKCFYFSE…SYTHRKWICS (105 aa)). Asparagine 110 carries an N-linked (GlcNAc...) asparagine glycan. Cysteine 118 and cysteine 200 are oxidised to a cystine.

Detected in ileum, liver, kidney and in IL2-activated natural killer cells.

The protein localises to the cell membrane. Its function is as follows. Lectin-type cell surface receptor. The chain is C-type lectin domain family 2 member H (Clec2h) from Mus musculus (Mouse).